A 134-amino-acid polypeptide reads, in one-letter code: Small ribosomal subunit protein bS6 (134 aa).

The disordered stretch occupies residues 99-134 (PSQLAKSADEKRARKAPRSENFDNDQDDESNDDSDE). A compositionally biased stretch (basic and acidic residues) spans 105–119 (SADEKRARKAPRSEN). The segment covering 120 to 134 (FDNDQDDESNDDSDE) has biased composition (acidic residues).

This sequence belongs to the bacterial ribosomal protein bS6 family.

Its function is as follows. Binds together with bS18 to 16S ribosomal RNA. This chain is Small ribosomal subunit protein bS6, found in Psychrobacter sp. (strain PRwf-1).